Here is an 899-residue protein sequence, read N- to C-terminus: Bifunctional uridylyltransferase/uridylyl-removing enzyme (899 aa).

The segment at 1–347 (MFISDPTDSL…PESERPEKSV (347 aa)) is uridylyltransferase. Residues 348 to 718 (LNARFNRVGD…EHRELALDAV (371 aa)) are uridylyl-removing. The HD domain maps to 465 to 581 (VDAHILLLIR…TKFANLVGNV (117 aa)). 2 ACT domains span residues 719–804 (QIFI…RLPR) and 827–899 (VMSL…TPSC).

Belongs to the GlnD family. It depends on Mg(2+) as a cofactor.

The catalysed reaction is [protein-PII]-L-tyrosine + UTP = [protein-PII]-uridylyl-L-tyrosine + diphosphate. The enzyme catalyses [protein-PII]-uridylyl-L-tyrosine + H2O = [protein-PII]-L-tyrosine + UMP + H(+). Uridylyltransferase (UTase) activity is inhibited by glutamine, while glutamine activates uridylyl-removing (UR) activity. Functionally, modifies, by uridylylation and deuridylylation, the PII regulatory proteins (GlnB and homologs), in response to the nitrogen status of the cell that GlnD senses through the glutamine level. Under low glutamine levels, catalyzes the conversion of the PII proteins and UTP to PII-UMP and PPi, while under higher glutamine levels, GlnD hydrolyzes PII-UMP to PII and UMP (deuridylylation). Thus, controls uridylylation state and activity of the PII proteins, and plays an important role in the regulation of nitrogen assimilation and metabolism. This chain is Bifunctional uridylyltransferase/uridylyl-removing enzyme, found in Psychrobacter sp. (strain PRwf-1).